A 132-amino-acid chain; its full sequence is Large ribosomal subunit protein bL17 (132 aa).

It belongs to the bacterial ribosomal protein bL17 family. Part of the 50S ribosomal subunit. Contacts protein L32.

This Anaplasma phagocytophilum (strain HZ) protein is Large ribosomal subunit protein bL17.